A 329-amino-acid polypeptide reads, in one-letter code: UDP-sugar transporter sqv-7 (329 aa).

The next 9 membrane-spanning stretches (helical) occupy residues 15 to 34 (SAVFYGVISVLIVFVNKILL), 41 to 63 (SFLFVGVGQMMATILILFFAKMF), 86 to 108 (YFFNLISGLGGTQMINLPMFTVL), 129 to 151 (SKAVKISVGLMIGGSFIAAIYDL), 155 to 174 (ALGYTMIFINNICTAALGVY), 187 to 209 (YGLMFYNCLFMLLPALCVVQYTG), 224 to 246 (TSSVWTCFLLSCICGFVLNYSLV), 253 to 275 (SALTTTCVGPIKNLFVTYVGMFS), and 280 to 302 (VFQWANFTGINVSVFGSILYTYV).

This sequence belongs to the TPT transporter family. SLC35D subfamily.

It localises to the golgi apparatus membrane. Its function is as follows. Acts as a transporter of UDP-glucuronic acid (UDP-GlcA), UDP-N-acetylgalactosamine (UDP-GalNAc) and UDP-galactose (UDP-Gal) from the cytoplasm into the Golgi lumen. Involved in the biosynthesis of glycoconjugates that play a pivotal role in development. Involved in the synthesis of chondroitin sulfate and heparan sulfate proteoglycans. Required for embryonic development. Involved in vulva epithelium invagination and embryonic development. Involved in the directed migration of hermaphrodite-specific neurons. This is UDP-sugar transporter sqv-7 (sqv-7) from Caenorhabditis elegans.